We begin with the raw amino-acid sequence, 605 residues long: MSRFRRGGKAPDPLSGFRAPKEQEPAVPHGLIKAARKSGQLNLSARGLTDVPVSVWRINVDTPPEAHQNVDFGGSDRWWEQTDLTKLILASNKLQLLSEDISLLPALVVLDIHDNQIVSLPCAIKELTNLQKLNISHNKIKQLPKELQHLQNLKSLLLQHNQLEELPDSIGHLSILEELDVSNNCLRSISSSVGQLTGLVKFNLSSNKLTALPTEIGKMKNLKQLDCTSNLLENVPASVAGMESLEQLYLRQNKLTYLPELPFLTKLKELHVGNNQIQTLGPEHLQNLSSLSVLELRYNKLKVLPEEISLLNGLERLDLSNNDLGSLPCTLGSLPNLKSLQLEGNPLRGIRRDILNKGTQELLKYLKGRVQVPDVKTQEDENSTATAMTLPSESVVNTHAIVTLKTLEYCEKQASLIPEAVFNATGSSFITTVNFSKNQLTEVPARIVEMKDSVCDVNLGFNKISSISLNLCMLLKLTHIDMRNNVLTSLPSEMEAMTRLQSVILSFNRFKHFPDVLYRIPTLETILISSNQIGSIDPTQLIKMTKLSTLDLQNNDLLQIPPALGNCESLRALHLEGNPFRNPRAAILAKGTVAVLEYLRSRIPT.

The segment at 1–26 (MSRFRRGGKAPDPLSGFRAPKEQEPA) is disordered. LRR repeat units follow at residues 83–104 (DLTKLILASNKLQLLSEDISLL), 106–127 (ALVVLDIHDNQIVSLPCAIKEL), 129–151 (NLQKLNISHNKIKQLPKELQHLQ), 152–173 (NLKSLLLQHNQLEELPDSIGHL), 175–196 (ILEELDVSNNCLRSISSSVGQL), 198–219 (GLVKFNLSSNKLTALPTEIGKM), 221–242 (NLKQLDCTSNLLENVPASVAGM), 244–265 (SLEQLYLRQNKLTYLPELPFLT), 266–287 (KLKELHVGNNQIQTLGPEHLQN), 290–311 (SLSVLELRYNKLKVLPEEISLL), 313–335 (GLERLDLSNNDLGSLPCTLGSLP), 336–357 (NLKSLQLEGNPLRGIRRDILNK), 429–450 (FITTVNFSKNQLTEVPARIVEM), 453–475 (SVCDVNLGFNKISSISLNLCMLL), 476–497 (KLTHIDMRNNVLTSLPSEMEAM), 499–520 (RLQSVILSFNRFKHFPDVLYRI), 522–543 (TLETILISSNQIGSIDPTQLIK), 546–567 (KLSTLDLQNNDLLQIPPALGNC), and 569–590 (SLRALHLEGNPFRNPRAAILAK).

This is Leucine-rich repeat-containing protein 40 (lrrc40) from Xenopus tropicalis (Western clawed frog).